The chain runs to 2179 residues: Axotactin (2179 aa).

Positions 1–18 are cleaved as a signal peptide; sequence MAFPYIWALLPLICSASG. At 19-1816 the chain is on the extracellular side; sequence LSLPNMTSTD…DENKQEDSTQ (1798 aa). N-linked (GlcNAc...) asparagine glycans are attached at residues asparagine 23 and asparagine 52. Residues 59-107 are disordered; the sequence is GGLAGSSTGGQSLPDTGGGNSAGGSPAGGSSGTGGGGSNSGISGNNSAM. A compositionally biased stretch (gly residues) spans 74–97; the sequence is TGGGNSAGGSPAGGSSGTGGGGSN. N-linked (GlcNAc...) asparagine glycosylation is present at asparagine 103. One can recognise a BPTI/Kunitz inhibitor domain in the interval 119–170; that stretch reads CAGPGDPGPCKQYIYKWRYEPTTNECTNFIWGGCEGNPQNRFGTEAECLFHC. 3 cysteine pairs are disulfide-bonded: cysteine 119–cysteine 170, cysteine 128–cysteine 152, and cysteine 144–cysteine 166. A disordered region spans residues 201–220; it reads YTQSPAQSPDGMGGAEGGDG. Residues 211–220 show a composition bias toward gly residues; sequence GMGGAEGGDG. A Laminin G-like 1 domain is found at 242–438; that stretch reads KTFIFAKNNT…TKHENVNEGC (197 aa). Residue asparagine 249 is glycosylated (N-linked (GlcNAc...) asparagine). Intrachain disulfides connect cysteine 405–cysteine 438, cysteine 442–cysteine 455, cysteine 449–cysteine 464, and cysteine 466–cysteine 476. The region spanning 439-477 is the EGF-like 1 domain; that stretch reads SDMCESRHNLCFVGSRCINHYGGISCDCFGTHYEGEHCD. Laminin G-like domains follow at residues 481–664 and 660–839; these read ATII…AEFV and EAEF…LDNC. N-linked (GlcNAc...) asparagine glycans are attached at residues asparagine 542, asparagine 571, and asparagine 741. 4 disulfides stabilise this stretch: cysteine 808/cysteine 839, cysteine 845/cysteine 857, cysteine 851/cysteine 866, and cysteine 868/cysteine 878. Residues 841 to 879 enclose the EGF-like 2 domain; sequence YIDPCKRPNTCEHGGKCFVKDDRVTCDCKHTGYIGKNCH. 4 N-linked (GlcNAc...) asparagine glycosylation sites follow: asparagine 925, asparagine 1000, asparagine 1019, and asparagine 1026. One can recognise a Laminin G-like 4 domain in the interval 1087–1259; that stretch reads YVVTFTTSQS…VHLSEIIKDC (173 aa). 4 cysteine pairs are disulfide-bonded: cysteine 1231/cysteine 1259, cysteine 1263/cysteine 1274, cysteine 1268/cysteine 1283, and cysteine 1285/cysteine 1296. One can recognise an EGF-like 3 domain in the interval 1260 to 1297; the sequence is KPSCVPSPCRNGAQCKELWSSFKCVCNNPWAHIGEFCE. The Laminin G-like 5 domain maps to 1316-1526; the sequence is RNYLSVGATP…PTQEGVLPNC (211 aa). N-linked (GlcNAc...) asparagine glycosylation is present at asparagine 1393. Intrachain disulfides connect cysteine 1494-cysteine 1526, cysteine 1530-cysteine 1541, cysteine 1535-cysteine 1552, and cysteine 1554-cysteine 1564. The EGF-like 4 domain maps to 1527–1565; it reads QIKCDAEPCKNGGTCQEHFAEQLSTCDCEHTSFLGEFCS. Residues 1569–1765 enclose the Laminin G-like 6 domain; sequence GADFSGESTL…NPQGVRSAQC (197 aa). Residues asparagine 1667, asparagine 1707, asparagine 1751, and asparagine 1782 are each glycosylated (N-linked (GlcNAc...) asparagine). Cysteine 1722 and cysteine 1765 are joined by a disulfide. Residues 1817–1837 form a helical membrane-spanning segment; that stretch reads VVFLTLTSVFVIIVICCLLEV. Residues 1838 to 2179 lie on the Cytoplasmic side of the membrane; that stretch reads YRSHLAYKKR…TSIDSILSLD (342 aa). Disordered stretches follow at residues 1891 to 2141 and 2156 to 2179; these read YTYK…PTLF and SYLG…LSLD. Positions 1916-1930 are enriched in polar residues; it reads GSATPSQPGTPTALS. Over residues 1940–1949 the composition is skewed to acidic residues; it reads EEEEEEEDEA. Over residues 1954–1966 the composition is skewed to basic and acidic residues; the sequence is AAEKSGENEEPPA. 2 stretches are compositionally biased toward polar residues: residues 1969-1981 and 2010-2025; these read TTAS…QAQP and EPSS…QLAQ. The span at 2064–2079 shows a compositional bias: basic and acidic residues; that stretch reads PQEHKSRHKATDDTEA. A compositionally biased stretch (low complexity) spans 2082–2091; the sequence is QQQQQQQQQQ. Composition is skewed to polar residues over residues 2092–2105 and 2165–2179; these read SFDV…SSLP and PRSN…LSLD.

Its subcellular location is the cell projection. The protein localises to the axon. It localises to the membrane. In terms of biological role, may have serine protease inhibitor activity. Might play a role in the glial-neuronal signaling pathway that is important in establishing the electrical properties of axonal membranes. This Drosophila melanogaster (Fruit fly) protein is Axotactin.